We begin with the raw amino-acid sequence, 27 residues long: Ganodermin (27 aa).

Has antifungal activity against B.cinera, F.oxysporum and P.piricola with IC(50) values of 15.2 uM, 12.4 uM and 18.1 uM, respectively. Lacks hemagglutinating activity towards rabbit erythrocytes. Lacks deoxyribonuclease, ribonuclease and protease inhibitory activities. This chain is Ganodermin, found in Ganoderma lucidum (Ling zhi medicinal fungus).